The primary structure comprises 680 residues: SH3 domain-binding protein 1 (680 aa).

Positions 1–11 (MMKRQLHRMRQ) are enriched in basic residues. Disordered stretches follow at residues 1–24 (MMKRQLHRMRQLAHTGSSGRTPET) and 160–184 (SQAAKNSGSNQGLGGASGSHTHTTT). An interaction with CGNL1 region spans residues 1–275 (MMKRQLHRMR…TAAPFSRVYG (275 aa)). The BAR domain maps to 81–262 (MAESFKELDP…RDNHSQADHS (182 aa)). The span at 160–169 (SQAAKNSGSN) shows a compositional bias: polar residues. A phosphoserine mark is found at Ser-241 and Ser-262. The Rho-GAP domain maps to 276–469 (VSLRTHLQDL…ALIQNADTLF (194 aa)). The segment at 470 to 680 (PGDINFNVSG…RPRGLISETE (211 aa)) is interaction with CD2AP. The tract at residues 488-680 (EKVSSQQVSE…RPRGLISETE (193 aa)) is disordered. Pro residues predominate over residues 502-516 (VTVPAPATTPAPTPA). Ser-535 bears the Phosphoserine mark. The span at 536–546 (PKVSRNPTETA) shows a compositional bias: polar residues. Positions 561-571 (PARPTMPPPQP) are enriched in pro residues. Ser-582 carries the phosphoserine modification. Phosphothreonine is present on Thr-592. The SH3-binding motif lies at 607 to 616 (APTMPPPLPP). The span at 609–621 (TMPPPLPPVPPQP) shows a compositional bias: pro residues. A Phosphoserine modification is found at Ser-632. Positions 660-671 (HPPPPALPPQPR) are enriched in pro residues.

As to quaternary structure, interacts with RAC1. Interacts with the exocyst via EXOC4 and EXOC8; required for the localization of both SH3BP1 and the exocyst to the leading edge of migrating cells. Interacts with CD2AP and CGNL1; probably part of a complex at cell junctions. Interacts with CAPZA1; recruits CAPZA1 to forming cell junctions. May interact with AFDN. Interacts with PLXND1; they dissociate upon SEMA3E binding to PLXND1 allowing SH3BP1 to transduce downstream signal through RAC1 inactivation. Interacts with ABL1, GRB2 and SRC (via SH3 domain). Expressed in all tissues examined. Highest levels found in spleen and brain, lowest in heart and liver.

The protein resides in the cell projection. Its subcellular location is the cell junction. It is found in the tight junction. The protein localises to the adherens junction. It localises to the phagocytic cup. The protein resides in the nucleus. Its subcellular location is the cytoplasm. It is found in the cytosol. In terms of biological role, GTPase activating protein (GAP) which specifically converts GTP-bound Rho-type GTPases including RAC1 and CDC42 in their inactive GDP-bound form. By specifically inactivating RAC1 at the leading edge of migrating cells, it regulates the spatiotemporal organization of cell protrusions which is important for proper cell migration. Also negatively regulates CDC42 in the process of actin remodeling and the formation of epithelial cell junctions. Through its GAP activity toward RAC1 and/or CDC42 plays a specific role in phagocytosis of large particles. Specifically recruited by a PI3 kinase/PI3K-dependent mechanism to sites of large particles engagement, inactivates RAC1 and/or CDC42 allowing the reorganization of the underlying actin cytoskeleton required for engulfment. It also plays a role in angiogenesis and the process of repulsive guidance as part of a semaphorin-plexin signaling pathway. Following the binding of PLXND1 to extracellular SEMA3E it dissociates from PLXND1 and inactivates RAC1, inducing the intracellular reorganization of the actin cytoskeleton and the collapse of cells. The polypeptide is SH3 domain-binding protein 1 (Mus musculus (Mouse)).